Here is a 384-residue protein sequence, read N- to C-terminus: Beta-ureidopropionase (384 aa).

Residues 72-344 (VHVGLVQNRI…DGLLVAKLDL (273 aa)) enclose the CN hydrolase domain. Catalysis depends on glutamate 119, which acts as the Proton acceptor. Residue lysine 196 is the Proton donor of the active site. The active-site Nucleophile is the cysteine 233. Residue serine 378 is modified to Phosphoserine.

This sequence belongs to the carbon-nitrogen hydrolase superfamily. BUP family. As to quaternary structure, homodimer, homotetramer, homooctamer; can also form higher homooligomers.

The protein resides in the cytoplasm. The enzyme catalyses 3-(carbamoylamino)propanoate + H2O + 2 H(+) = beta-alanine + NH4(+) + CO2. The catalysed reaction is 3-(carbamoylamino)-2-methylpropanoate + H2O + 2 H(+) = (R)-3-amino-2-methylpropanoate + NH4(+) + CO2. It participates in amino-acid biosynthesis; beta-alanine biosynthesis. Functionally, catalyzes a late step in pyrimidine degradation. Converts N-carbamoyl-beta-alanine (3-ureidopropanoate) into beta-alanine, ammonia and carbon dioxide. Likewise, converts N-carbamoyl-beta-aminoisobutyrate (3-ureidoisobutyrate) into beta-aminoisobutyrate, ammonia and carbon dioxide. This chain is Beta-ureidopropionase (UPB1), found in Pongo abelii (Sumatran orangutan).